Reading from the N-terminus, the 590-residue chain is Probable lysine-specific demethylase 4B (590 aa).

One can recognise a JmjN domain in the interval 9-51; that stretch reads IKVFRPTWEEFKDFPKYVAYMESQGAHKAGLAKVVPPPEWVPR. Tyr-130 contributes to the 2-oxoglutarate binding site. The JmjC domain occupies 140-306; the sequence is DTDQDSWNIN…YGKRAVQCTC (167 aa). Positions 186 and 188 each coordinate Fe cation. Residues Asn-196 and Lys-204 each coordinate 2-oxoglutarate. 2 residues coordinate Zn(2+): Cys-232 and His-238. Lys-239 contributes to the 2-oxoglutarate binding site. A Fe cation-binding site is contributed by His-274. Residues Cys-304 and Cys-306 each coordinate Zn(2+). Disordered stretches follow at residues 372–395 and 417–590; these read PTKA…QNPN and ATDE…TASP. The segment covering 445–458 has biased composition (acidic residues); it reads EYIDDGTEDDDEEE. The segment covering 480–494 has biased composition (basic residues); sequence SKRKTNSRNNRGRSP. Low complexity-rich tracts occupy residues 502-513 and 537-571; these read ISPASSTSSTSR and TTSP…TPPA.

Belongs to the JHDM3 histone demethylase family. Fe(2+) serves as cofactor.

The protein resides in the nucleus. The enzyme catalyses N(6),N(6),N(6)-trimethyl-L-lysyl(9)-[histone H3] + 2 2-oxoglutarate + 2 O2 = N(6)-methyl-L-lysyl(9)-[histone H3] + 2 formaldehyde + 2 succinate + 2 CO2. Probable histone demethylase that specifically demethylates 'Lys-9' and 'Lys-36' residues of histone H3, thereby playing a central role in histone code. Demethylation of Lys residue generates formaldehyde and succinate. This is Probable lysine-specific demethylase 4B (Kdm4B) from Drosophila melanogaster (Fruit fly).